We begin with the raw amino-acid sequence, 487 residues long: Diacylglycerol kinase 4 (487 aa).

In terms of domain architecture, DAGKc spans 86-242 (TPEVPLMVFV…LDSWNILITM (157 aa)).

Belongs to the eukaryotic diacylglycerol kinase family. As to quaternary structure, monomer. In terms of tissue distribution, highly expressed in pollen grains. Expressed in roots, hypocotyls, leaf vasculature, developing anthers and stigmas, and receptacles of siliques.

The protein localises to the endoplasmic reticulum. It localises to the cytoplasm. It is found in the cytosol. It carries out the reaction a 1,2-diacyl-sn-glycerol + ATP = a 1,2-diacyl-sn-glycero-3-phosphate + ADP + H(+). Phosphorylates the second messenger diacylglycerol (DAG) to generate phosphatidic acid (PA), another important signaling molecule. PA is required for plant development and responses to abiotic stress and pathogen attack. May be involved in the accumulation of PA during cold stress. Involved in the regulation of PA and phosphatidylcholine biosynthesis in growing pollen tubes. Required for nitric oxide-dependent pollen tube growth and re-orientation responses. Functions together with DGK2 in male gametophyte development and biosynthesis of phosphatidylglycerol and phosphatidylinositol in the endoplasmic reticulum (ER). Involved in PA production for pollen grain growth, as well as leaf and root growth. Possesses guanylyl cyclase activity in vitro. The polypeptide is Diacylglycerol kinase 4 (Arabidopsis thaliana (Mouse-ear cress)).